Reading from the N-terminus, the 221-residue chain is Small ribosomal subunit protein uS3c (221 aa).

One can recognise a KH type-2 domain in the interval 39 to 109; sequence LRDYLKTRLA…RVIVHVVEIA (71 aa).

The protein belongs to the universal ribosomal protein uS3 family. As to quaternary structure, part of the 30S ribosomal subunit.

Its subcellular location is the plastid. The protein resides in the chloroplast. This Nephroselmis olivacea (Green alga) protein is Small ribosomal subunit protein uS3c (rps3).